Reading from the N-terminus, the 249-residue chain is Ribonuclease HII (249 aa).

One can recognise an RNase H type-2 domain in the interval 30–221; the sequence is GPVAGVDEVG…VRRLVMDGEP (192 aa). A divalent metal cation contacts are provided by D36, E37, and D130.

This sequence belongs to the RNase HII family. Requires Mn(2+) as cofactor. It depends on Mg(2+) as a cofactor.

It is found in the cytoplasm. The catalysed reaction is Endonucleolytic cleavage to 5'-phosphomonoester.. Its function is as follows. Endonuclease that specifically degrades the RNA of RNA-DNA hybrids. The sequence is that of Ribonuclease HII from Mycolicibacterium vanbaalenii (strain DSM 7251 / JCM 13017 / BCRC 16820 / KCTC 9966 / NRRL B-24157 / PYR-1) (Mycobacterium vanbaalenii).